Reading from the N-terminus, the 322-residue chain is Peroxidase 66 (322 aa).

The first 24 residues, 1–24, serve as a signal peptide directing secretion; that stretch reads MAFSKGLIFAMIFAVLAIVKPSEA. Disulfide bonds link C35/C114 and C68/C73. H66 acts as the Proton acceptor in catalysis. 4 residues coordinate Ca(2+): D67, G72, D74, and S76. The N-linked (GlcNAc...) asparagine glycan is linked to N155. P161 is a substrate binding site. N166 is a glycosylation site (N-linked (GlcNAc...) asparagine). Residue H191 participates in heme b binding. T192 contacts Ca(2+). Residues C198 and C230 are joined by a disulfide bond. Residue N207 is glycosylated (N-linked (GlcNAc...) asparagine). The Ca(2+) site is built by D245, T247, and D252.

It belongs to the peroxidase family. Classical plant (class III) peroxidase subfamily. Heme b is required as a cofactor. It depends on Ca(2+) as a cofactor.

The protein localises to the secreted. It carries out the reaction 2 a phenolic donor + H2O2 = 2 a phenolic radical donor + 2 H2O. Functionally, removal of H(2)O(2), oxidation of toxic reductants, biosynthesis and degradation of lignin, suberization, auxin catabolism, response to environmental stresses such as wounding, pathogen attack and oxidative stress. These functions might be dependent on each isozyme/isoform in each plant tissue. The protein is Peroxidase 66 (PER66) of Arabidopsis thaliana (Mouse-ear cress).